Consider the following 315-residue polypeptide: Acetyl-coenzyme A carboxylase carboxyl transferase subunit alpha (315 aa).

Residues 40–293 form the CoA carboxyltransferase C-terminal domain; the sequence is LQDKSKTLTE…REELSSQLAM (254 aa).

It belongs to the AccA family. In terms of assembly, acetyl-CoA carboxylase is a heterohexamer composed of biotin carboxyl carrier protein (AccB), biotin carboxylase (AccC) and two subunits each of ACCase subunit alpha (AccA) and ACCase subunit beta (AccD).

It localises to the cytoplasm. The enzyme catalyses N(6)-carboxybiotinyl-L-lysyl-[protein] + acetyl-CoA = N(6)-biotinyl-L-lysyl-[protein] + malonyl-CoA. The protein operates within lipid metabolism; malonyl-CoA biosynthesis; malonyl-CoA from acetyl-CoA: step 1/1. Component of the acetyl coenzyme A carboxylase (ACC) complex. First, biotin carboxylase catalyzes the carboxylation of biotin on its carrier protein (BCCP) and then the CO(2) group is transferred by the carboxyltransferase to acetyl-CoA to form malonyl-CoA. The protein is Acetyl-coenzyme A carboxylase carboxyl transferase subunit alpha of Pseudomonas syringae pv. syringae (strain B728a).